We begin with the raw amino-acid sequence, 572 residues long: Proline--tRNA ligase (572 aa).

Belongs to the class-II aminoacyl-tRNA synthetase family. ProS type 1 subfamily. In terms of assembly, homodimer.

It localises to the cytoplasm. It catalyses the reaction tRNA(Pro) + L-proline + ATP = L-prolyl-tRNA(Pro) + AMP + diphosphate. Catalyzes the attachment of proline to tRNA(Pro) in a two-step reaction: proline is first activated by ATP to form Pro-AMP and then transferred to the acceptor end of tRNA(Pro). As ProRS can inadvertently accommodate and process non-cognate amino acids such as alanine and cysteine, to avoid such errors it has two additional distinct editing activities against alanine. One activity is designated as 'pretransfer' editing and involves the tRNA(Pro)-independent hydrolysis of activated Ala-AMP. The other activity is designated 'posttransfer' editing and involves deacylation of mischarged Ala-tRNA(Pro). The misacylated Cys-tRNA(Pro) is not edited by ProRS. This is Proline--tRNA ligase from Escherichia coli O157:H7.